The following is a 208-amino-acid chain: ATP-dependent Clp protease proteolytic subunit (208 aa).

The Nucleophile role is filled by S111. H136 is an active-site residue.

It belongs to the peptidase S14 family. As to quaternary structure, fourteen ClpP subunits assemble into 2 heptameric rings which stack back to back to give a disk-like structure with a central cavity, resembling the structure of eukaryotic proteasomes.

Its subcellular location is the cytoplasm. The enzyme catalyses Hydrolysis of proteins to small peptides in the presence of ATP and magnesium. alpha-casein is the usual test substrate. In the absence of ATP, only oligopeptides shorter than five residues are hydrolyzed (such as succinyl-Leu-Tyr-|-NHMec, and Leu-Tyr-Leu-|-Tyr-Trp, in which cleavage of the -Tyr-|-Leu- and -Tyr-|-Trp bonds also occurs).. Its function is as follows. Cleaves peptides in various proteins in a process that requires ATP hydrolysis. Has a chymotrypsin-like activity. Plays a major role in the degradation of misfolded proteins. The chain is ATP-dependent Clp protease proteolytic subunit from Vibrio campbellii (strain ATCC BAA-1116).